A 336-amino-acid chain; its full sequence is Tryptophan--tRNA ligase 1 (336 aa).

ATP contacts are provided by residues 9–11 (KPT) and 17–18 (GN). Residues 10-18 (PTGHLTLGN) carry the 'HIGH' region motif. Asp137 serves as a coordination point for L-tryptophan. ATP-binding positions include 149 to 151 (GED), Val188, and 197 to 201 (KMGKS). Residues 197 to 201 (KMGKS) carry the 'KMSKS' region motif.

The protein belongs to the class-I aminoacyl-tRNA synthetase family. As to quaternary structure, homodimer.

The protein localises to the cytoplasm. The catalysed reaction is tRNA(Trp) + L-tryptophan + ATP = L-tryptophyl-tRNA(Trp) + AMP + diphosphate + H(+). In terms of biological role, catalyzes the attachment of tryptophan to tRNA(Trp). This Streptomyces coelicolor (strain ATCC BAA-471 / A3(2) / M145) protein is Tryptophan--tRNA ligase 1.